A 533-amino-acid chain; its full sequence is CTP synthase (533 aa).

The amidoligase domain stretch occupies residues 1–270 (MVHLAKYIVV…GDYIVRRIEL (270 aa)). Position 16 (S16) interacts with CTP. S16 contacts UTP. Residue 17–22 (SIGKGI) participates in ATP binding. Y57 provides a ligand contact to L-glutamine. D74 contacts ATP. Residues D74 and E144 each contribute to the Mg(2+) site. CTP contacts are provided by residues 151 to 153 (DIE), 191 to 196 (KTKPTQ), and K227. Residues 191–196 (KTKPTQ) and K227 each bind UTP. In terms of domain architecture, Glutamine amidotransferase type-1 spans 303–533 (YVELEDSYIS…FLRAALERSR (231 aa)). Position 355 (G355) interacts with L-glutamine. The Nucleophile; for glutamine hydrolysis role is filled by C382. L-glutamine contacts are provided by residues 383 to 386 (LGMQ), E405, and R462. Residues H507 and E509 contribute to the active site.

Belongs to the CTP synthase family. In terms of assembly, homotetramer.

The catalysed reaction is UTP + L-glutamine + ATP + H2O = CTP + L-glutamate + ADP + phosphate + 2 H(+). It carries out the reaction L-glutamine + H2O = L-glutamate + NH4(+). The enzyme catalyses UTP + NH4(+) + ATP = CTP + ADP + phosphate + 2 H(+). It functions in the pathway pyrimidine metabolism; CTP biosynthesis via de novo pathway; CTP from UDP: step 2/2. Allosterically activated by GTP, when glutamine is the substrate; GTP has no effect on the reaction when ammonia is the substrate. The allosteric effector GTP functions by stabilizing the protein conformation that binds the tetrahedral intermediate(s) formed during glutamine hydrolysis. Inhibited by the product CTP, via allosteric rather than competitive inhibition. Functionally, catalyzes the ATP-dependent amination of UTP to CTP with either L-glutamine or ammonia as the source of nitrogen. Regulates intracellular CTP levels through interactions with the four ribonucleotide triphosphates. The chain is CTP synthase from Methanothermobacter thermautotrophicus (strain ATCC 29096 / DSM 1053 / JCM 10044 / NBRC 100330 / Delta H) (Methanobacterium thermoautotrophicum).